The chain runs to 616 residues: Dihydroxy-acid dehydratase (616 aa).

Asp81 is a binding site for Mg(2+). Residue Cys122 coordinates [2Fe-2S] cluster. Residues Asp123 and Lys124 each contribute to the Mg(2+) site. N6-carboxylysine is present on Lys124. [2Fe-2S] cluster is bound at residue Cys195. A Mg(2+)-binding site is contributed by Glu491. Ser517 serves as the catalytic Proton acceptor.

This sequence belongs to the IlvD/Edd family. As to quaternary structure, homodimer. The cofactor is [2Fe-2S] cluster. It depends on Mg(2+) as a cofactor.

It carries out the reaction (2R)-2,3-dihydroxy-3-methylbutanoate = 3-methyl-2-oxobutanoate + H2O. The enzyme catalyses (2R,3R)-2,3-dihydroxy-3-methylpentanoate = (S)-3-methyl-2-oxopentanoate + H2O. Its pathway is amino-acid biosynthesis; L-isoleucine biosynthesis; L-isoleucine from 2-oxobutanoate: step 3/4. The protein operates within amino-acid biosynthesis; L-valine biosynthesis; L-valine from pyruvate: step 3/4. Functionally, functions in the biosynthesis of branched-chain amino acids. Catalyzes the dehydration of (2R,3R)-2,3-dihydroxy-3-methylpentanoate (2,3-dihydroxy-3-methylvalerate) into 2-oxo-3-methylpentanoate (2-oxo-3-methylvalerate) and of (2R)-2,3-dihydroxy-3-methylbutanoate (2,3-dihydroxyisovalerate) into 2-oxo-3-methylbutanoate (2-oxoisovalerate), the penultimate precursor to L-isoleucine and L-valine, respectively. This is Dihydroxy-acid dehydratase from Shigella flexneri.